Here is a 1220-residue protein sequence, read N- to C-terminus: DNA-directed RNA polymerase subunit beta' (1220 aa).

4 residues coordinate Zn(2+): C60, C62, C75, and C78. Residues D449, D451, and D453 each coordinate Mg(2+). 4 residues coordinate Zn(2+): C818, C892, C899, and C902.

It belongs to the RNA polymerase beta' chain family. As to quaternary structure, the RNAP catalytic core consists of 2 alpha, 1 beta, 1 beta' and 1 omega subunit. When a sigma factor is associated with the core the holoenzyme is formed, which can initiate transcription. It depends on Mg(2+) as a cofactor. Requires Zn(2+) as cofactor.

It carries out the reaction RNA(n) + a ribonucleoside 5'-triphosphate = RNA(n+1) + diphosphate. Functionally, DNA-dependent RNA polymerase catalyzes the transcription of DNA into RNA using the four ribonucleoside triphosphates as substrates. In Lacticaseibacillus casei (strain BL23) (Lactobacillus casei), this protein is DNA-directed RNA polymerase subunit beta'.